Here is a 264-residue protein sequence, read N- to C-terminus: Probable septum site-determining protein MinC (264 aa).

The interval 103–147 (SHGRRPRGGNDAKDADRNDAQDAQGAPEHAQAAEAPASTSAIPPA) is disordered. Positions 110 to 122 (GGNDAKDADRNDA) are enriched in basic and acidic residues. Residues 124 to 147 (DAQGAPEHAQAAEAPASTSAIPPA) are compositionally biased toward low complexity.

It belongs to the MinC family. In terms of assembly, interacts with MinD and FtsZ.

Cell division inhibitor that blocks the formation of polar Z ring septums. Rapidly oscillates between the poles of the cell to destabilize FtsZ filaments that have formed before they mature into polar Z rings. Prevents FtsZ polymerization. This Ralstonia pickettii (strain 12J) protein is Probable septum site-determining protein MinC.